The chain runs to 308 residues: UDP-N-acetylenolpyruvoylglucosamine reductase (308 aa).

One can recognise an FAD-binding PCMH-type domain in the interval 32–197 (QTGGKADYYL…LEAAFTLAPG (166 aa)). R176 is an active-site residue. S226 acts as the Proton donor in catalysis. Residue E296 is part of the active site.

This sequence belongs to the MurB family. FAD is required as a cofactor.

The protein localises to the cytoplasm. It catalyses the reaction UDP-N-acetyl-alpha-D-muramate + NADP(+) = UDP-N-acetyl-3-O-(1-carboxyvinyl)-alpha-D-glucosamine + NADPH + H(+). Its pathway is cell wall biogenesis; peptidoglycan biosynthesis. Its function is as follows. Cell wall formation. This Staphylococcus saprophyticus subsp. saprophyticus (strain ATCC 15305 / DSM 20229 / NCIMB 8711 / NCTC 7292 / S-41) protein is UDP-N-acetylenolpyruvoylglucosamine reductase.